A 71-amino-acid chain; its full sequence is uncharacterized protein (71 aa).

Positions 1-26 are cleaved as a signal peptide; it reads MIKFSVILGMIRCSLTHITTKNTVNA.

This is an uncharacterized protein from Bacillus subtilis (strain 168).